We begin with the raw amino-acid sequence, 144 residues long: UPF0292 protein MA_4098 (144 aa).

Positions 28 to 109 constitute a Toprim domain; that stretch reads GAVIIVEGKR…KPELQIRNKL (82 aa). Mg(2+)-binding residues include glutamate 34, aspartate 78, and aspartate 80.

The protein belongs to the UPF0292 family. Requires Mg(2+) as cofactor.

The protein is UPF0292 protein MA_4098 of Methanosarcina acetivorans (strain ATCC 35395 / DSM 2834 / JCM 12185 / C2A).